The following is a 100-amino-acid chain: MAKQQITERRREDLLQGIERYQDLTSWPNTLHKCNIRHLCMQPIFWAPLRKTTRILTSSIAVLSLKYNAYPSDYLDKAQGSLRRPAKVFLPFFLRFLCIN.

This is an uncharacterized protein from Saccharomyces cerevisiae (strain ATCC 204508 / S288c) (Baker's yeast).